We begin with the raw amino-acid sequence, 271 residues long: Mannosyl-3-phosphoglycerate phosphatase (271 aa).

The active-site Nucleophile is the aspartate 13. Mg(2+) is bound by residues aspartate 13, aspartate 15, and aspartate 214.

The protein belongs to the HAD-like hydrolase superfamily. MPGP family. Requires Mg(2+) as cofactor.

It is found in the cytoplasm. It carries out the reaction 2-O-(alpha-D-mannosyl)-3-phosphoglycerate + H2O = (2R)-2-O-(alpha-D-mannosyl)-glycerate + phosphate. This Escherichia coli O127:H6 (strain E2348/69 / EPEC) protein is Mannosyl-3-phosphoglycerate phosphatase.